Here is a 326-residue protein sequence, read N- to C-terminus: ATP-dependent 6-phosphofructokinase (326 aa).

Glycine 12 is an ATP binding site. Position 22–26 (22–26) interacts with ADP; sequence RAIIK. ATP contacts are provided by residues 73–74 and 103–106; these read RF and GDGS. Aspartate 104 lines the Mg(2+) pocket. 126–128 lines the substrate pocket; it reads TID. Catalysis depends on aspartate 128, which acts as the Proton acceptor. Arginine 155 contacts ADP. Residues arginine 163 and 170-172 contribute to the substrate site; that span reads MGH. Residues 186–188, lysine 212, and 215–217 each bind ADP; these read GSE and KRS. Residues glutamate 224, lysine 246, and 252–255 contribute to the substrate site; that span reads HIQR.

The protein belongs to the phosphofructokinase type A (PFKA) family. ATP-dependent PFK group I subfamily. Prokaryotic clade 'B1' sub-subfamily. In terms of assembly, homotetramer. It depends on Mg(2+) as a cofactor.

Its subcellular location is the cytoplasm. The enzyme catalyses beta-D-fructose 6-phosphate + ATP = beta-D-fructose 1,6-bisphosphate + ADP + H(+). It functions in the pathway carbohydrate degradation; glycolysis; D-glyceraldehyde 3-phosphate and glycerone phosphate from D-glucose: step 3/4. Its activity is regulated as follows. Allosterically activated by ADP and other diphosphonucleosides, and allosterically inhibited by phosphoenolpyruvate. Its function is as follows. Catalyzes the phosphorylation of D-fructose 6-phosphate to fructose 1,6-bisphosphate by ATP, the first committing step of glycolysis. This is ATP-dependent 6-phosphofructokinase from Mycoplasmopsis pulmonis (strain UAB CTIP) (Mycoplasma pulmonis).